The primary structure comprises 403 residues: Argininosuccinate synthase (403 aa).

10–18 (AYSGGLDTS) is a binding site for ATP. An L-citrulline-binding site is contributed by Tyr87. Gly117 lines the ATP pocket. Residues Thr119, Asn123, and Asp124 each contribute to the L-aspartate site. Asn123 lines the L-citrulline pocket. L-citrulline-binding residues include Arg127, Ser175, Glu260, and Tyr272.

The protein belongs to the argininosuccinate synthase family. Type 1 subfamily. Homotetramer.

The protein resides in the cytoplasm. The enzyme catalyses L-citrulline + L-aspartate + ATP = 2-(N(omega)-L-arginino)succinate + AMP + diphosphate + H(+). The protein operates within amino-acid biosynthesis; L-arginine biosynthesis; L-arginine from L-ornithine and carbamoyl phosphate: step 2/3. The sequence is that of Argininosuccinate synthase from Bacillus velezensis (strain DSM 23117 / BGSC 10A6 / LMG 26770 / FZB42) (Bacillus amyloliquefaciens subsp. plantarum).